The following is a 70-amino-acid chain: ATP synthase subunit c (70 aa).

2 helical membrane-spanning segments follow: residues 4-24 (IAAA…NGLI) and 45-65 (IMFI…VIAF).

The protein belongs to the ATPase C chain family. F-type ATPases have 2 components, F(1) - the catalytic core - and F(0) - the membrane proton channel. F(1) has five subunits: alpha(3), beta(3), gamma(1), delta(1), epsilon(1). F(0) has three main subunits: a(1), b(2) and c(10-14). The alpha and beta chains form an alternating ring which encloses part of the gamma chain. F(1) is attached to F(0) by a central stalk formed by the gamma and epsilon chains, while a peripheral stalk is formed by the delta and b chains.

It is found in the cell membrane. Functionally, f(1)F(0) ATP synthase produces ATP from ADP in the presence of a proton or sodium gradient. F-type ATPases consist of two structural domains, F(1) containing the extramembraneous catalytic core and F(0) containing the membrane proton channel, linked together by a central stalk and a peripheral stalk. During catalysis, ATP synthesis in the catalytic domain of F(1) is coupled via a rotary mechanism of the central stalk subunits to proton translocation. Key component of the F(0) channel; it plays a direct role in translocation across the membrane. A homomeric c-ring of between 10-14 subunits forms the central stalk rotor element with the F(1) delta and epsilon subunits. This chain is ATP synthase subunit c, found in Staphylococcus aureus (strain Mu3 / ATCC 700698).